A 532-amino-acid chain; its full sequence is Probable calcium-binding mitochondrial carrier CBG00135 (532 aa).

4 EF-hand domains span residues 70 to 105 (EKEK…QTPH), 107 to 136 (PATM…NYVI), 137 to 172 (AHEA…MGVN), and 173 to 208 (LDDH…YPST). Positions 83, 85, 87, 89, and 94 each coordinate Ca(2+). Positions 150, 152, 154, 156, and 161 each coordinate Ca(2+). Solcar repeat units lie at residues 243–329 (GVWW…IKRW), 339–425 (LTTY…LKSC), and 436–526 (PGVL…VRKQ). 6 helical membrane-spanning segments follow: residues 249 to 266 (LVAG…TAPF), 304 to 323 (GNGI…FMSY), 349 to 362 (SSAG…IYPM), 400 to 419 (GYLP…LTVY), 442 to 459 (LACG…SYPL), and 501 to 518 (GITP…ISYV).

This sequence belongs to the mitochondrial carrier (TC 2.A.29) family.

The protein resides in the mitochondrion inner membrane. Functionally, calcium-dependent mitochondrial solute carrier. The sequence is that of Probable calcium-binding mitochondrial carrier CBG00135 from Caenorhabditis briggsae.